The primary structure comprises 94 residues: Large ribosomal subunit protein bL25 (94 aa).

This sequence belongs to the bacterial ribosomal protein bL25 family. Part of the 50S ribosomal subunit; part of the 5S rRNA/L5/L18/L25 subcomplex. Contacts the 5S rRNA. Binds to the 5S rRNA independently of L5 and L18.

Functionally, this is one of the proteins that binds to the 5S RNA in the ribosome where it forms part of the central protuberance. This is Large ribosomal subunit protein bL25 from Enterobacter sp. (strain 638).